Consider the following 841-residue polypeptide: DNA mismatch repair protein MutS (841 aa).

600 to 607 (GPNMAGKS) lines the ATP pocket.

This sequence belongs to the DNA mismatch repair MutS family.

This protein is involved in the repair of mismatches in DNA. It is possible that it carries out the mismatch recognition step. This protein has a weak ATPase activity. The sequence is that of DNA mismatch repair protein MutS from Carboxydothermus hydrogenoformans (strain ATCC BAA-161 / DSM 6008 / Z-2901).